The following is a 766-amino-acid chain: Phosphoribosylformylglycinamidine synthase subunit PurL (766 aa).

His46 is a catalytic residue. Tyr49 and Lys88 together coordinate ATP. Glu90 contacts Mg(2+). Residues 91–94 (SHNH) and Arg113 each bind substrate. The active-site Proton acceptor is the His92. Asp114 serves as a coordination point for Mg(2+). Substrate is bound at residue Gln237. A Mg(2+)-binding site is contributed by Asp265. 309–311 (ESQ) contacts substrate. The ATP site is built by Asp520 and Gly557. Asn558 contributes to the Mg(2+) binding site. Ser560 serves as a coordination point for substrate.

The protein belongs to the FGAMS family. In terms of assembly, monomer. Part of the FGAM synthase complex composed of 1 PurL, 1 PurQ and 2 PurS subunits.

The protein resides in the cytoplasm. It carries out the reaction N(2)-formyl-N(1)-(5-phospho-beta-D-ribosyl)glycinamide + L-glutamine + ATP + H2O = 2-formamido-N(1)-(5-O-phospho-beta-D-ribosyl)acetamidine + L-glutamate + ADP + phosphate + H(+). The protein operates within purine metabolism; IMP biosynthesis via de novo pathway; 5-amino-1-(5-phospho-D-ribosyl)imidazole from N(2)-formyl-N(1)-(5-phospho-D-ribosyl)glycinamide: step 1/2. Functionally, part of the phosphoribosylformylglycinamidine synthase complex involved in the purines biosynthetic pathway. Catalyzes the ATP-dependent conversion of formylglycinamide ribonucleotide (FGAR) and glutamine to yield formylglycinamidine ribonucleotide (FGAM) and glutamate. The FGAM synthase complex is composed of three subunits. PurQ produces an ammonia molecule by converting glutamine to glutamate. PurL transfers the ammonia molecule to FGAR to form FGAM in an ATP-dependent manner. PurS interacts with PurQ and PurL and is thought to assist in the transfer of the ammonia molecule from PurQ to PurL. The protein is Phosphoribosylformylglycinamidine synthase subunit PurL of Synechococcus sp. (strain JA-3-3Ab) (Cyanobacteria bacterium Yellowstone A-Prime).